The sequence spans 408 residues: Acetate kinase (408 aa).

Asn-7 lines the Mg(2+) pocket. Lys-14 lines the ATP pocket. Arg-91 contributes to the substrate binding site. Asp-148 serves as the catalytic Proton donor/acceptor. ATP is bound by residues 208-212 (HLGNG), 283-285 (DFR), and 331-335 (GIGEN). Glu-384 lines the Mg(2+) pocket.

This sequence belongs to the acetokinase family. In terms of assembly, homodimer. Requires Mg(2+) as cofactor. Mn(2+) is required as a cofactor.

The protein localises to the cytoplasm. The catalysed reaction is acetate + ATP = acetyl phosphate + ADP. Its pathway is metabolic intermediate biosynthesis; acetyl-CoA biosynthesis; acetyl-CoA from acetate: step 1/2. In terms of biological role, catalyzes the formation of acetyl phosphate from acetate and ATP. Can also catalyze the reverse reaction. The polypeptide is Acetate kinase (Methanosarcina mazei (Methanosarcina frisia)).